Reading from the N-terminus, the 77-residue chain is Acyl carrier protein (77 aa).

Residues Met1 to Gln76 form the Carrier domain. At Ser36 the chain carries O-(pantetheine 4'-phosphoryl)serine.

The protein belongs to the acyl carrier protein (ACP) family. Post-translationally, 4'-phosphopantetheine is transferred from CoA to a specific serine of apo-ACP by AcpS. This modification is essential for activity because fatty acids are bound in thioester linkage to the sulfhydryl of the prosthetic group.

It is found in the cytoplasm. It participates in lipid metabolism; fatty acid biosynthesis. Its function is as follows. Carrier of the growing fatty acid chain in fatty acid biosynthesis. This chain is Acyl carrier protein, found in Campylobacter lari (strain RM2100 / D67 / ATCC BAA-1060).